The sequence spans 297 residues: Homoserine kinase (297 aa).

82 to 92 (PVSRGLGSSAA) lines the ATP pocket.

It belongs to the GHMP kinase family. Homoserine kinase subfamily.

The protein resides in the cytoplasm. It catalyses the reaction L-homoserine + ATP = O-phospho-L-homoserine + ADP + H(+). The protein operates within amino-acid biosynthesis; L-threonine biosynthesis; L-threonine from L-aspartate: step 4/5. In terms of biological role, catalyzes the ATP-dependent phosphorylation of L-homoserine to L-homoserine phosphate. This Clostridium botulinum (strain Langeland / NCTC 10281 / Type F) protein is Homoserine kinase.